Reading from the N-terminus, the 260-residue chain is Spectinomycin 9-adenylyltransferase (260 aa).

It carries out the reaction spectinomycin + ATP = 9-O-adenylylspectinomycin + diphosphate. Its function is as follows. Mediates bacterial resistance to the antibiotic spectinomycin but not streptomycin. The sequence is that of Spectinomycin 9-adenylyltransferase (ant1) from Staphylococcus aureus (strain Mu50 / ATCC 700699).